The primary structure comprises 1188 residues: Integrin alpha-11 (1188 aa).

The signal sequence occupies residues 1 to 22 (MDLPRGLVVAWALSLWPGFTDT). The Extracellular portion of the chain corresponds to 23-1141 (FNMDTRKPRV…ISKQEDWQVP (1119 aa)). FG-GAP repeat units lie at residues 24–85 (NMDT…NCTK) and 91–151 (VTLS…FSKT). Cys-76 and Cys-83 form a disulfide bridge. 2 N-linked (GlcNAc...) asparagine glycosylation sites follow: Asn-82 and Asn-95. Cystine bridges form between Cys-121–Cys-139 and Cys-129–Cys-159. The region spanning 164–345 (DIVIVLDGSN…AALKDIVDAL (182 aa)) is the VWFA domain. N-linked (GlcNAc...) asparagine glycans are attached at residues Asn-291, Asn-331, Asn-358, Asn-449, and Asn-462. 5 FG-GAP repeats span residues 355–406 (TNKN…VIPL), 411–461 (LKEF…TMHN), 462–527 (NRSL…LFVY), 528–586 (NGTL…SILK), and 590–650 (QRIT…FEPS). Asp-488, Asp-490, Asp-492, and Asp-496 together coordinate Ca(2+). The N-linked (GlcNAc...) asparagine glycan is linked to Asn-528. 8 residues coordinate Ca(2+): Asp-551, Asn-553, Asp-555, Asp-559, Asp-613, Asn-615, Asp-617, and Asp-621. The N-linked (GlcNAc...) asparagine glycan is linked to Asn-642. Cystine bridges form between Cys-659–Cys-668, Cys-674–Cys-729, and Cys-781–Cys-787. Asn-694 is a glycosylation site (N-linked (GlcNAc...) asparagine). Asn-857 is a glycosylation site (N-linked (GlcNAc...) asparagine). A disulfide bond links Cys-881 and Cys-893. N-linked (GlcNAc...) asparagine glycans are attached at residues Asn-894, Asn-973, Asn-1031, Asn-1039, and Asn-1059. A helical transmembrane segment spans residues 1142–1164 (IWIIVGSTLGGLLLLALLVLALW). Topologically, residues 1165–1188 (KLGFFRSARRRREPGLDPTPKVLE) are cytoplasmic.

This sequence belongs to the integrin alpha chain family. As to quaternary structure, heterodimer of an alpha and a beta subunit. Alpha-11 associates with beta-1. Interacts with RAB21. According to PubMed:10464311, highest levels of expression in uterus and heart, intermediate levels in skeletal muscle and intermediate to low levels in pancreas, kidney and placenta. According to PubMed:10486209, also found in brain, colon, lung, small intestine, stomach, testis, salivary glands, thyroid glands and prostate. Very low levels in peripheral blood lymphocytes, fetal brain and fetal liver.

It is found in the membrane. Functionally, integrin alpha-11/beta-1 is a receptor for collagen. This chain is Integrin alpha-11 (ITGA11), found in Homo sapiens (Human).